A 619-amino-acid chain; its full sequence is Kinesin light chain 4 (619 aa).

N-acetylserine is present on Ser2. Positions 32–150 form a coiled coil; sequence GLESLHSEHQ…EEEKKHLEFL (119 aa). The TPR 1 repeat unit spans residues 55–88; that stretch reads QQGGHEEGLVHEKARQLRRSMENIELGLSEAQVM. Residues 156–175 are compositionally biased toward basic and acidic residues; the sequence is YDEDGHSMEEKEGDASKDSL. Residues 156-200 are disordered; sequence YDEDGHSMEEKEGDASKDSLDDLFPNEEEEDSSNDLSRGQGAAAA. Phosphoserine is present on Ser174. Positions 179–188 are enriched in acidic residues; that stretch reads FPNEEEEDSS. TPR repeat units follow at residues 211–244, 253–286, 295–328, 337–370, and 379–412; these read LRTLHNLVIQYAAQGRYEVAVPLCKQALEDLERT, ATMLNILALVYRDQNKYKEAAHLLNDALSIREST, AATLNNLAVLYGKRGKYKEAEPLCQRALEIREKV, AKQLNNLALLCQNQGKYEAVERYYQRALAIYERQ, and ARTKNNLASCYLKQGKYSEAETLYKEILTRAHVQ. Ser460 bears the Phosphoserine mark. The TPR 7 repeat unit spans residues 464–497; it reads NTTLRNLGALYRRQGKLEAAETLEECALRSRKQG. Ser565, Ser566, and Ser590 each carry phosphoserine. The tract at residues 571–619 is disordered; it reads RKLQGTEPRPSSSNMKRAASLNYLNQPNAAPLQTSRGLSASTVDLSSSS. The span at 592 to 608 shows a compositional bias: polar residues; it reads NYLNQPNAAPLQTSRGL. Residues 609 to 619 show a composition bias toward low complexity; it reads SASTVDLSSSS. A Phosphothreonine modification is found at Thr612.

It belongs to the kinesin light chain family. As to quaternary structure, oligomeric complex composed of two heavy chains and two light chains.

The protein resides in the cytoplasm. It localises to the cytoskeleton. In terms of biological role, kinesin is a microtubule-associated force-producing protein that may play a role in organelle transport. The light chain may function in coupling of cargo to the heavy chain or in the modulation of its ATPase activity. This Rattus norvegicus (Rat) protein is Kinesin light chain 4 (Klc4).